Reading from the N-terminus, the 407-residue chain is 5-aminolevulinate synthase 1 (407 aa).

Positions 21, 137, and 156 each coordinate substrate. Pyridoxal 5'-phosphate-binding residues include Ser189, His217, and Thr245. The active site involves Lys248. At Lys248 the chain carries N6-(pyridoxal phosphate)lysine. Pyridoxal 5'-phosphate is bound by residues Ser277 and Thr278. Position 363 (Thr363) interacts with substrate.

Belongs to the class-II pyridoxal-phosphate-dependent aminotransferase family. Homodimer. The cofactor is pyridoxal 5'-phosphate.

It catalyses the reaction succinyl-CoA + glycine + H(+) = 5-aminolevulinate + CO2 + CoA. It participates in porphyrin-containing compound metabolism; protoporphyrin-IX biosynthesis; 5-aminolevulinate from glycine: step 1/1. The sequence is that of 5-aminolevulinate synthase 1 (hemA) from Cereibacter sphaeroides (strain ATCC 17023 / DSM 158 / JCM 6121 / CCUG 31486 / LMG 2827 / NBRC 12203 / NCIMB 8253 / ATH 2.4.1.) (Rhodobacter sphaeroides).